The sequence spans 348 residues: Protein RecA (348 aa).

An ATP-binding site is contributed by 66 to 73; that stretch reads GPESSGKT.

The protein belongs to the RecA family.

It localises to the cytoplasm. Can catalyze the hydrolysis of ATP in the presence of single-stranded DNA, the ATP-dependent uptake of single-stranded DNA by duplex DNA, and the ATP-dependent hybridization of homologous single-stranded DNAs. It interacts with LexA causing its activation and leading to its autocatalytic cleavage. This chain is Protein RecA, found in Legionella pneumophila (strain Paris).